We begin with the raw amino-acid sequence, 1066 residues long: Pumilio homolog 2 (1066 aa).

Residues 1-260 are interaction with SNAPIN; it reads MNHDFQALAL…ATVGLFDYNS (260 aa). Residues serine 67, serine 82, and serine 102 each carry the phosphoserine modification. A disordered region spans residues 106 to 204; sequence KLDSRFRKGN…NPSEGLGPLP (99 aa). Residues 119–133 are compositionally biased toward basic and acidic residues; it reads RDAETDGPEKGDQKG. Serine 136, serine 178, and serine 182 each carry phosphoserine. Phosphothreonine occurs at positions 184 and 396. Residues 494 to 553 form a disordered region; it reads STNGLFRPIGTQPPQQQQQQPSTNLQSNSFYGSSSLTNSSQSSSLFSHGPGQPGSTSLGF. A compositionally biased stretch (low complexity) spans 505–514; it reads QPPQQQQQQP. Residues 515-525 are compositionally biased toward polar residues; that stretch reads STNLQSNSFYG. Positions 526-540 are enriched in low complexity; it reads SSSLTNSSQSSSLFS. Phosphoserine occurs at positions 587 and 592. Residues 620–650 form a disordered region; the sequence is SPIGMPLPSQTPGHSLTPPPSLSSHGSSSSL. Low complexity predominate over residues 630 to 650; the sequence is TPGHSLTPPPSLSSHGSSSSL. Omega-N-methylarginine is present on arginine 674. Residues serine 684 and serine 700 each carry the phosphoserine modification. Residues 706–1048 form the PUM-HD domain; the sequence is GRSRLLEDFR…HILAKLEKYY (343 aa). 8 Pumilio repeats span residues 726–761, 762–797, 798–835, 836–871, 872–907, 908–943, 944–979, and 983–1022; these read DLIG…MVFN, EILQ…ALAT, RIRG…EMVK, ELDG…FIID, AFKG…PILE, ELHQ…KIVS, EIRG…LLID, and CQND…IIMH. Positions 741–745 are adenine-nucleotide binding in RNA target; that stretch reads SRFIQ. A uracil-nucleotide binding in RNA target region spans residues 777-781; the sequence is NYVIQ. The tract at residues 813–817 is adenine-nucleotide binding in RNA target; sequence CRVIQ. A non-specific-nucleotide binding in RNA target region spans residues 851–855; it reads NHVVQ. The adenine-nucleotide binding in RNA target stretch occupies residues 887-891; it reads CRVIQ. The interval 923–927 is uracil-nucleotide binding in RNA target; that stretch reads NYVIQ. Residues 959–963 are guanine-nucleotide binding in RNA target; sequence SNVVE. The uracil-nucleotide binding in RNA target stretch occupies residues 1002–1006; sequence NYVVQ.

In terms of assembly, homodimer; homodimerizes in vitro. Interacts with DAZ1, DAZL and NANOS1 via its pumilio repeats. Interacts with NANOS3. Interacts with SNAPIN. Recruits the CCR4-POP2-NOT deadenylase leading to translational inhibition and mRNA degradation. Interacts with DDX20. In case of viral infection, interacts with DHX58. Interacts with TRIM71 (via NHL repeats) in an RNA-dependent manner. Expressed in male germ cells of adult testis (at protein level). Highly expressed in testis and ovary. Predominantly expressed in stem cells and germ cells. Expressed at lower level in brain, heart, kidney, liver, muscle, placenta, intestine and stomach Expressed in cerebellum, corpus callosum, caudate nucleus, hippocampus, medulla oblongata and putamen. Expressed in all fetal tissues tested.

The protein resides in the cytoplasm. The protein localises to the cytoplasmic granule. It is found in the perinuclear region. Sequence-specific RNA-binding protein that acts as a post-transcriptional repressor by binding the 3'-UTR of mRNA targets. Binds to an RNA consensus sequence, the Pumilio Response Element (PRE), 5'-UGUANAUA-3', that is related to the Nanos Response Element (NRE) (, PubMed:21397187). Mediates post-transcriptional repression of transcripts via different mechanisms: acts via direct recruitment of the CCR4-POP2-NOT deadenylase leading to translational inhibition and mRNA degradation. Also mediates deadenylation-independent repression by promoting accessibility of miRNAs. Acts as a post-transcriptional repressor of E2F3 mRNAs by binding to its 3'-UTR and facilitating miRNA regulation. Plays a role in cytoplasmic sensing of viral infection. Represses a program of genes necessary to maintain genomic stability such as key mitotic, DNA repair and DNA replication factors. Its ability to repress those target mRNAs is regulated by the lncRNA NORAD (non-coding RNA activated by DNA damage) which, due to its high abundance and multitude of PUMILIO binding sites, is able to sequester a significant fraction of PUM1 and PUM2 in the cytoplasm. May regulate DCUN1D3 mRNA levels. May support proliferation and self-renewal of stem cells. Binds specifically to miRNA MIR199A precursor, with PUM1, regulates miRNA MIR199A expression at a postranscriptional level. The protein is Pumilio homolog 2 (PUM2) of Homo sapiens (Human).